The following is a 342-amino-acid chain: S-adenosylmethionine:tRNA ribosyltransferase-isomerase (342 aa).

Belongs to the QueA family. Monomer.

The protein localises to the cytoplasm. It catalyses the reaction 7-aminomethyl-7-carbaguanosine(34) in tRNA + S-adenosyl-L-methionine = epoxyqueuosine(34) in tRNA + adenine + L-methionine + 2 H(+). Its pathway is tRNA modification; tRNA-queuosine biosynthesis. Functionally, transfers and isomerizes the ribose moiety from AdoMet to the 7-aminomethyl group of 7-deazaguanine (preQ1-tRNA) to give epoxyqueuosine (oQ-tRNA). In Bacillus velezensis (strain DSM 23117 / BGSC 10A6 / LMG 26770 / FZB42) (Bacillus amyloliquefaciens subsp. plantarum), this protein is S-adenosylmethionine:tRNA ribosyltransferase-isomerase.